The following is a 319-amino-acid chain: Putative olfactory receptor 52L2 (319 aa).

Topologically, residues 1 to 43 (MNLDSFFSFLLKSLIMALSNSSWRLPQPSFFLVGIPGLEESQH) are extracellular. Asn-20 carries an N-linked (GlcNAc...) asparagine glycan. The chain crosses the membrane as a helical span at residues 44–64 (WIALPLGILYLLALVGNVTIL). At 65 to 72 (FIIWMDPS) the chain is on the cytoplasmic side. The chain crosses the membrane as a helical span at residues 73-93 (LHQSMYLFLSMLAAIDLVVAS). Over 94-117 (STAPKALAVLLVRAQEIGYTVCLI) the chain is Extracellular. Cysteines 115 and 207 form a disulfide. A helical transmembrane segment spans residues 118 to 138 (QMFFTHAFSSMESGVLVAMAL). Residues 139–157 (DRYVAICHPLHHSTILHPG) lie on the Cytoplasmic side of the membrane. Residues 158-178 (VIGHIGMVVLVRGLLLLIPFL) traverse the membrane as a helical segment. Residues 179–214 (ILLRKLIFCQATIIGHAYCEHMAVVKLACSETTVNR) lie on the Extracellular side of the membrane. The helical transmembrane segment at 215 to 235 (AYGLTVALLVVGLDVLAIGVS) threads the bilayer. The Cytoplasmic segment spans residues 236–255 (YAHILQAVLKVPGNEARLKA). A helical membrane pass occupies residues 256 to 276 (FSTCGSHVCVILVFYIPGMFS). The Extracellular portion of the chain corresponds to 277–291 (FLTHRFGHHVPHHVH). A helical transmembrane segment spans residues 292–312 (VLLAILYRLVPPALNPLVYRV). Over 313–319 (KTQKIHQ) the chain is Cytoplasmic.

The protein belongs to the G-protein coupled receptor 1 family.

Its subcellular location is the cell membrane. Its function is as follows. Odorant receptor. This chain is Putative olfactory receptor 52L2 (OR52L2P), found in Homo sapiens (Human).